A 307-amino-acid chain; its full sequence is Aspartate carbamoyltransferase catalytic subunit (307 aa).

2 residues coordinate carbamoyl phosphate: arginine 59 and threonine 60. Lysine 87 provides a ligand contact to L-aspartate. Arginine 109, histidine 137, and glutamine 140 together coordinate carbamoyl phosphate. The L-aspartate site is built by arginine 173 and arginine 223. Carbamoyl phosphate-binding residues include glycine 266 and proline 267.

Belongs to the aspartate/ornithine carbamoyltransferase superfamily. ATCase family. In terms of assembly, heterododecamer (2C3:3R2) of six catalytic PyrB chains organized as two trimers (C3), and six regulatory PyrI chains organized as three dimers (R2).

It catalyses the reaction carbamoyl phosphate + L-aspartate = N-carbamoyl-L-aspartate + phosphate + H(+). It participates in pyrimidine metabolism; UMP biosynthesis via de novo pathway; (S)-dihydroorotate from bicarbonate: step 2/3. Catalyzes the condensation of carbamoyl phosphate and aspartate to form carbamoyl aspartate and inorganic phosphate, the committed step in the de novo pyrimidine nucleotide biosynthesis pathway. The polypeptide is Aspartate carbamoyltransferase catalytic subunit (Helicobacter pylori (strain Shi470)).